The primary structure comprises 403 residues: Tyrosine--tRNA ligase (403 aa).

Residues 42-51 carry the 'HIGH' region motif; the sequence is PTAPDLHLGH. The 'KMSKS' region motif lies at 226 to 230; that stretch reads KMSKS. An ATP-binding site is contributed by Lys-229. The region spanning 339–400 is the S4 RNA-binding domain; that stretch reads LRIASLLTAA…GKRNFARVAL (62 aa).

This sequence belongs to the class-I aminoacyl-tRNA synthetase family. TyrS type 2 subfamily. As to quaternary structure, homodimer.

The protein localises to the cytoplasm. It catalyses the reaction tRNA(Tyr) + L-tyrosine + ATP = L-tyrosyl-tRNA(Tyr) + AMP + diphosphate + H(+). Its function is as follows. Catalyzes the attachment of tyrosine to tRNA(Tyr) in a two-step reaction: tyrosine is first activated by ATP to form Tyr-AMP and then transferred to the acceptor end of tRNA(Tyr). This Xanthomonas campestris pv. campestris (strain ATCC 33913 / DSM 3586 / NCPPB 528 / LMG 568 / P 25) protein is Tyrosine--tRNA ligase.